Reading from the N-terminus, the 208-residue chain is MSSTKRARNQVRLSRALGLPLTPKAAKYFEKRPYPPGEHGRARRRTESDYAVRLKEKQRLRAQYGIREAQLRRAFDEARREAGLTGEALVELLEMRLDALVLRSGFARTIAQARQAVVHRHVLVDGKIVDRPSFRVKPGQVIQVKPRSQARTPFQVAAAGAHRDVLAQVPEYLDVSLEKLRSELVRRPKRAEVPVTADVQLIVEWYAR.

Residues 28-48 (YFEKRPYPPGEHGRARRRTES) form a disordered region. The 65-residue stretch at 95-159 (MRLDALVLRS…ARTPFQVAAA (65 aa)) folds into the S4 RNA-binding domain.

The protein belongs to the universal ribosomal protein uS4 family. In terms of assembly, part of the 30S ribosomal subunit. Contacts protein S5. The interaction surface between S4 and S5 is involved in control of translational fidelity.

In terms of biological role, one of the primary rRNA binding proteins, it binds directly to 16S rRNA where it nucleates assembly of the body of the 30S subunit. Functionally, with S5 and S12 plays an important role in translational accuracy. In Beutenbergia cavernae (strain ATCC BAA-8 / DSM 12333 / CCUG 43141 / JCM 11478 / NBRC 16432 / NCIMB 13614 / HKI 0122), this protein is Small ribosomal subunit protein uS4.